The chain runs to 829 residues: Protein Jade-1 (829 aa).

A compositionally biased stretch (polar residues) spans methionine 1 to serine 10. The disordered stretch occupies residues methionine 1 to glutamate 40. The span at asparagine 15–serine 26 shows a compositional bias: low complexity. The PHD-type 1 zinc finger occupies aspartate 196 to glycine 246. The C2HC pre-PHD-type zinc-finger motif lies at phenylalanine 248–valine 282. The segment at leucine 306 to serine 362 adopts a PHD-type 2 zinc-finger fold. Disordered stretches follow at residues glutamate 368–threonine 408, proline 556–serine 651, and alanine 697–serine 829. A compositionally biased stretch (basic and acidic residues) spans aspartate 374 to glycine 390. Polar residues-rich tracts occupy residues serine 394–proline 405, glycine 570–arginine 586, and serine 607–alanine 619. Positions arginine 622 to arginine 648 are enriched in basic and acidic residues. Positions alanine 697 to histidine 714 are enriched in polar residues. The span at lysine 738–alanine 754 shows a compositional bias: basic and acidic residues. Residues serine 762–proline 774 show a composition bias toward low complexity. Positions threonine 782 to glutamate 792 are enriched in basic and acidic residues.

It belongs to the JADE family. Component of the HBO1 complex composed.

Its subcellular location is the nucleus. The protein resides in the chromosome. It localises to the cytoplasm. It is found in the cytoskeleton. The protein localises to the cilium basal body. In terms of biological role, scaffold subunit of some HBO1 complexes, which have a histone H4 acetyltransferase activity. Plays a key role in HBO1 complex by directing KAT7/HBO1 specificity towards histone H4 acetylation (H4K5ac, H4K8ac and H4K12ac), regulating DNA replication initiation, regulating DNA replication initiation. In Danio rerio (Zebrafish), this protein is Protein Jade-1 (jade1).